A 330-amino-acid polypeptide reads, in one-letter code: Phosphate acyltransferase (330 aa).

It belongs to the PlsX family. Homodimer. Probably interacts with PlsY.

It is found in the cytoplasm. The enzyme catalyses a fatty acyl-[ACP] + phosphate = an acyl phosphate + holo-[ACP]. It participates in lipid metabolism; phospholipid metabolism. In terms of biological role, catalyzes the reversible formation of acyl-phosphate (acyl-PO(4)) from acyl-[acyl-carrier-protein] (acyl-ACP). This enzyme utilizes acyl-ACP as fatty acyl donor, but not acyl-CoA. The protein is Phosphate acyltransferase of Carboxydothermus hydrogenoformans (strain ATCC BAA-161 / DSM 6008 / Z-2901).